Reading from the N-terminus, the 105-residue chain is Phosphoribosyl-AMP cyclohydrolase (105 aa).

Residue Asp-72 coordinates Mg(2+). A Zn(2+)-binding site is contributed by Cys-73. Asp-74 and Asp-76 together coordinate Mg(2+). 2 residues coordinate Zn(2+): Cys-89 and Cys-96.

This sequence belongs to the PRA-CH family. Homodimer. It depends on Mg(2+) as a cofactor. Requires Zn(2+) as cofactor.

It localises to the cytoplasm. It carries out the reaction 1-(5-phospho-beta-D-ribosyl)-5'-AMP + H2O = 1-(5-phospho-beta-D-ribosyl)-5-[(5-phospho-beta-D-ribosylamino)methylideneamino]imidazole-4-carboxamide. Its pathway is amino-acid biosynthesis; L-histidine biosynthesis; L-histidine from 5-phospho-alpha-D-ribose 1-diphosphate: step 3/9. Catalyzes the hydrolysis of the adenine ring of phosphoribosyl-AMP. The sequence is that of Phosphoribosyl-AMP cyclohydrolase from Listeria monocytogenes serotype 4a (strain HCC23).